Consider the following 332-residue polypeptide: Glycerol-3-phosphate dehydrogenase [NAD(P)+] (332 aa).

3 residues coordinate NADPH: Trp13, Lys34, and Lys108. The sn-glycerol 3-phosphate site is built by Lys108, Gly136, and Ser138. Ala140 serves as a coordination point for NADPH. Residues Lys191, Asp244, Ser254, Arg255, and Asn256 each contribute to the sn-glycerol 3-phosphate site. Lys191 acts as the Proton acceptor in catalysis. Arg255 provides a ligand contact to NADPH. Val279 and Glu281 together coordinate NADPH.

This sequence belongs to the NAD-dependent glycerol-3-phosphate dehydrogenase family.

The protein localises to the cytoplasm. It carries out the reaction sn-glycerol 3-phosphate + NAD(+) = dihydroxyacetone phosphate + NADH + H(+). It catalyses the reaction sn-glycerol 3-phosphate + NADP(+) = dihydroxyacetone phosphate + NADPH + H(+). It participates in membrane lipid metabolism; glycerophospholipid metabolism. Its function is as follows. Catalyzes the reduction of the glycolytic intermediate dihydroxyacetone phosphate (DHAP) to sn-glycerol 3-phosphate (G3P), the key precursor for phospholipid synthesis. The chain is Glycerol-3-phosphate dehydrogenase [NAD(P)+] from Francisella tularensis subsp. holarctica (strain FTNF002-00 / FTA).